A 212-amino-acid chain; its full sequence is Adenylate kinase (212 aa).

Gly14–Thr19 lines the ATP pocket. Residues Ser34–Val63 form an NMP region. Residues Thr35, Arg40, Ser61 to Val63, Gly89 to Arg92, and Gln96 each bind AMP. The tract at residues Gln126 to Asp163 is LID. Arg127 lines the ATP pocket. Zn(2+)-binding residues include Cys130 and Cys133. Ser136 to Tyr137 provides a ligand contact to ATP. Residues Cys150 and Asp153 each coordinate Zn(2+). Arg160 and Arg171 together coordinate AMP. Position 199 (Gln199) interacts with ATP.

It belongs to the adenylate kinase family. As to quaternary structure, monomer.

It localises to the cytoplasm. It catalyses the reaction AMP + ATP = 2 ADP. The protein operates within purine metabolism; AMP biosynthesis via salvage pathway; AMP from ADP: step 1/1. Functionally, catalyzes the reversible transfer of the terminal phosphate group between ATP and AMP. Plays an important role in cellular energy homeostasis and in adenine nucleotide metabolism. This chain is Adenylate kinase, found in Mesomycoplasma hyopneumoniae (strain 7448) (Mycoplasma hyopneumoniae).